Consider the following 313-residue polypeptide: PDCD10 and GCKIII kinases-associated protein 1 (313 aa).

The disordered stretch occupies residues 40–89 (RLKGTQNSEVEVPRNALHDGSLSNSESRGSTTGLPHQGPLPQEDSEERPC). 2 positions are modified to phosphoserine: S60 and S64. A compositionally biased stretch (polar residues) spans 60–73 (SLSNSESRGSTTGL). The residue at position 104 (T104) is a Phosphothreonine. Phosphoserine is present on residues S107, S237, and S240. The disordered stretch occupies residues 253–286 (YFKEEGPTHPTPAADSGSEREDPHTYNGDREGVV). The span at 269–285 (GSEREDPHTYNGDREGV) shows a compositional bias: basic and acidic residues.

As to quaternary structure, interacts with KEAP1; this interaction prevents the ubiquitination of KEAP1 by TRIM25, thus protecting KEAP1 from degradation. Found in association with PDCD10 and members of the STE20 kinases, such as STK24, STK25 and STK26.

It localises to the cell membrane. Functionally, acts as a tumor suppressor. Acts as a tumor suppressor for colorectal cancer cell proliferation by targeting KEAP1/USP17/ELK1/CDK6 axis. This chain is PDCD10 and GCKIII kinases-associated protein 1, found in Mus musculus (Mouse).